A 92-amino-acid chain; its full sequence is UPF0250 protein PD_0532 (92 aa).

It belongs to the UPF0250 family.

The protein is UPF0250 protein PD_0532 of Xylella fastidiosa (strain Temecula1 / ATCC 700964).